Consider the following 358-residue polypeptide: S-adenosylmethionine:tRNA ribosyltransferase-isomerase (358 aa).

Belongs to the QueA family. In terms of assembly, monomer.

The protein localises to the cytoplasm. It catalyses the reaction 7-aminomethyl-7-carbaguanosine(34) in tRNA + S-adenosyl-L-methionine = epoxyqueuosine(34) in tRNA + adenine + L-methionine + 2 H(+). It functions in the pathway tRNA modification; tRNA-queuosine biosynthesis. Transfers and isomerizes the ribose moiety from AdoMet to the 7-aminomethyl group of 7-deazaguanine (preQ1-tRNA) to give epoxyqueuosine (oQ-tRNA). The protein is S-adenosylmethionine:tRNA ribosyltransferase-isomerase of Rhodopseudomonas palustris (strain BisA53).